The sequence spans 505 residues: Glycerol kinase 1 (505 aa).

Thr13 provides a ligand contact to ADP. Positions 13, 14, and 15 each coordinate ATP. Residue Thr13 participates in sn-glycerol 3-phosphate binding. Arg17 contacts ADP. Positions 83, 84, and 135 each coordinate sn-glycerol 3-phosphate. Residues Arg83, Glu84, and Tyr135 each contribute to the glycerol site. Position 231 is a phosphohistidine; by HPr (His231). Asp245 serves as a coordination point for sn-glycerol 3-phosphate. Positions 245 and 246 each coordinate glycerol. ADP is bound by residues Thr267 and Gly310. Residues Thr267, Gly310, Gln314, and Gly411 each contribute to the ATP site. Residues Gly411 and Asn415 each coordinate ADP.

This sequence belongs to the FGGY kinase family. In terms of assembly, homotetramer and homodimer (in equilibrium). The phosphoenolpyruvate-dependent sugar phosphotransferase system (PTS), including enzyme I, and histidine-containing protein (HPr) are required for the phosphorylation, which leads to the activation of the enzyme.

The catalysed reaction is glycerol + ATP = sn-glycerol 3-phosphate + ADP + H(+). It participates in polyol metabolism; glycerol degradation via glycerol kinase pathway; sn-glycerol 3-phosphate from glycerol: step 1/1. With respect to regulation, activated by phosphorylation and inhibited by fructose 1,6-bisphosphate (FBP). Key enzyme in the regulation of glycerol uptake and metabolism. Catalyzes the phosphorylation of glycerol to yield sn-glycerol 3-phosphate. The protein is Glycerol kinase 1 of Lactiplantibacillus plantarum (strain ATCC BAA-793 / NCIMB 8826 / WCFS1) (Lactobacillus plantarum).